A 505-amino-acid chain; its full sequence is Probable inorganic carbon transporter subunit DabB (505 aa).

Helical transmembrane passes span 9-29, 37-57, 68-88, 105-123, 162-182, 204-224, 231-251, 259-279, 303-323, 355-375, 382-402, 410-430, and 446-466; these read SLLT…LLFL, FVRI…LILA, WHLD…GFII, YFTL…WLSG, LFLL…HATG, TGIQ…WPFQ, IVAP…AGGI, LFHG…SVLI, GFML…HLIL, LWVM…WLTA, LISA…LVAF, IAGL…HHLF, and MSAV…GTWV.

The protein belongs to the inorganic carbon transporter (TC 9.A.2) DabB family. In terms of assembly, forms a complex with DabA.

Its subcellular location is the cell membrane. Functionally, part of an energy-coupled inorganic carbon pump. In Bacillus subtilis (strain 168), this protein is Probable inorganic carbon transporter subunit DabB.